The chain runs to 446 residues: Glutamyl-tRNA(Gln) amidotransferase subunit D (446 aa).

The Asparaginase/glutaminase domain maps to 90–421 (SEVMIISTGG…DRIKEIMLTN (332 aa)). Residues threonine 100, threonine 176, aspartate 177, and lysine 255 contribute to the active site.

It belongs to the asparaginase 1 family. GatD subfamily. As to quaternary structure, heterodimer of GatD and GatE.

The catalysed reaction is L-glutamyl-tRNA(Gln) + L-glutamine + ATP + H2O = L-glutaminyl-tRNA(Gln) + L-glutamate + ADP + phosphate + H(+). Allows the formation of correctly charged Gln-tRNA(Gln) through the transamidation of misacylated Glu-tRNA(Gln) in organisms which lack glutaminyl-tRNA synthetase. The reaction takes place in the presence of glutamine and ATP through an activated gamma-phospho-Glu-tRNA(Gln). The GatDE system is specific for glutamate and does not act on aspartate. The chain is Glutamyl-tRNA(Gln) amidotransferase subunit D from Sulfolobus acidocaldarius (strain ATCC 33909 / DSM 639 / JCM 8929 / NBRC 15157 / NCIMB 11770).